Consider the following 125-residue polypeptide: MIYGIGTDIVAVARLRGMWERHGDRVLDKLLTPQEIADFSKAADKGRFLAKRFAAKEAFSKALGTGVRPPATLPAIAVTHDDLGKPILECYGQLAEVLKNKNLRAHLSISDEAEYAVAYVILEHA.

Residues aspartate 8 and glutamate 57 each contribute to the Mg(2+) site.

Belongs to the P-Pant transferase superfamily. AcpS family. The cofactor is Mg(2+).

Its subcellular location is the cytoplasm. The catalysed reaction is apo-[ACP] + CoA = holo-[ACP] + adenosine 3',5'-bisphosphate + H(+). In terms of biological role, transfers the 4'-phosphopantetheine moiety from coenzyme A to a Ser of acyl-carrier-protein. This is Holo-[acyl-carrier-protein] synthase from Dechloromonas aromatica (strain RCB).